We begin with the raw amino-acid sequence, 201 residues long: ATP-dependent Clp protease proteolytic subunit (201 aa).

The active-site Nucleophile is Ser98. His123 is a catalytic residue.

This sequence belongs to the peptidase S14 family. Fourteen ClpP subunits assemble into 2 heptameric rings which stack back to back to give a disk-like structure with a central cavity, resembling the structure of eukaryotic proteasomes.

The protein localises to the cytoplasm. It carries out the reaction Hydrolysis of proteins to small peptides in the presence of ATP and magnesium. alpha-casein is the usual test substrate. In the absence of ATP, only oligopeptides shorter than five residues are hydrolyzed (such as succinyl-Leu-Tyr-|-NHMec, and Leu-Tyr-Leu-|-Tyr-Trp, in which cleavage of the -Tyr-|-Leu- and -Tyr-|-Trp bonds also occurs).. In terms of biological role, cleaves peptides in various proteins in a process that requires ATP hydrolysis. Has a chymotrypsin-like activity. Plays a major role in the degradation of misfolded proteins. The chain is ATP-dependent Clp protease proteolytic subunit from Rickettsia conorii (strain ATCC VR-613 / Malish 7).